Here is a 257-residue protein sequence, read N- to C-terminus: NAD kinase (257 aa).

D46 (proton acceptor) is an active-site residue. Residues 46 to 47 (DG), 116 to 117 (NE), D146, A154, 157 to 162 (TAYNLS), and N218 contribute to the NAD(+) site.

It belongs to the NAD kinase family. A divalent metal cation serves as cofactor.

Its subcellular location is the cytoplasm. The catalysed reaction is NAD(+) + ATP = ADP + NADP(+) + H(+). Functionally, involved in the regulation of the intracellular balance of NAD and NADP, and is a key enzyme in the biosynthesis of NADP. Catalyzes specifically the phosphorylation on 2'-hydroxyl of the adenosine moiety of NAD to yield NADP. The chain is NAD kinase from Brucella melitensis biotype 1 (strain ATCC 23456 / CCUG 17765 / NCTC 10094 / 16M).